A 62-amino-acid chain; its full sequence is Sec-independent protein translocase protein TatAc (62 aa).

A helical membrane pass occupies residues 8–28 (ILVILFVGFLVFGPDKLPALG).

The protein belongs to the TatA/E family. In terms of assembly, forms a complex with TatC.

It is found in the cell membrane. Functionally, part of the twin-arginine translocation (Tat) system that transports large folded proteins containing a characteristic twin-arginine motif in their signal peptide across membranes. TatA could form the protein-conducting channel of the Tat system. The chain is Sec-independent protein translocase protein TatAc from Bacillus subtilis (strain 168).